We begin with the raw amino-acid sequence, 344 residues long: Cyanuric acid amidohydrolase (344 aa).

Positions 1–91 (MTVVDIVKRT…ASAFVGTDRP (91 aa)) are RU A. Substrate is bound by residues Arg51 and 71-72 (SG). The RU B stretch occupies residues 97-232 (ALVAAVGRTA…CHILVLGNSP (136 aa)). Residue Lys146 is part of the active site. Substrate contacts are provided by residues Arg178 and 215–216 (SS). Catalysis depends on Ser215, which acts as the Nucleophile. The segment at 238-344 (LRAVHGVMRD…PVTVVYRVAS (107 aa)) is RU C. A Mg(2+)-binding site is contributed by Glu276. Substrate contacts are provided by residues Arg303 and 322 to 323 (SG). 5 residues coordinate Mg(2+): Ala325, Gln328, Gly329, Pro330, and Gly333.

This sequence belongs to the cyclic amide hydrolase (CyAH) family. As to quaternary structure, homotetramer.

It carries out the reaction cyanurate + H2O = 1-carboxybiuret + H(+). It participates in xenobiotic degradation; atrazine degradation; biuret from cyanurate: step 1/1. With respect to regulation, inhibited by barbituric acid. Responsible for the hydrolysis of cyanuric acid, an intermediate formed during catabolism of s-triazine based compounds in herbicides such as atrazine and polymers such as melamine. Catalyzes the hydrolytic opening of the s-triazine ring of cyanuric acid (2,4,6-trihydroxy-s-triazine) to yield carbon dioxide and carboxybiuret, which spontaneously decarboxylates to biuret. The protein is Cyanuric acid amidohydrolase of Pseudonocardia dioxanivorans (strain ATCC 55486 / DSM 44775 / JCM 13855 / CB1190).